The following is a 200-amino-acid chain: Cytochrome c biogenesis ATP-binding export protein CcmA (200 aa).

One can recognise an ABC transporter domain in the interval 3 to 200 (LSGRGLRCVR…AREMRIGAAA (198 aa)). 35 to 42 (GHNGAGKT) serves as a coordination point for ATP.

It belongs to the ABC transporter superfamily. CcmA exporter (TC 3.A.1.107) family. In terms of assembly, the complex is composed of two ATP-binding proteins (CcmA) and two transmembrane proteins (CcmB).

It localises to the cell inner membrane. The enzyme catalyses heme b(in) + ATP + H2O = heme b(out) + ADP + phosphate + H(+). Functionally, part of the ABC transporter complex CcmAB involved in the biogenesis of c-type cytochromes; once thought to export heme, this seems not to be the case, but its exact role is uncertain. Responsible for energy coupling to the transport system. The polypeptide is Cytochrome c biogenesis ATP-binding export protein CcmA (Rhodopseudomonas palustris (strain BisB5)).